The chain runs to 489 residues: CUGBP Elav-like family member 1-A (489 aa).

RRM domains are found at residues 16 to 99, 108 to 188, and 404 to 482; these read IKMF…PADS, RKLF…FADT, and ANLF…LKRS. Positions 183–210 are necessary for oligomerization and EDEN-dependent deadenylation; that stretch reads VKFADTQKDKEQKRMTQQLQQQMQQLNA.

This sequence belongs to the CELF/BRUNOL family. Oligomer. Oligomerization is required for RNA-binding and EDEN-dependent deadenylation. Post-translationally, phosphorylated during oocyte maturation and dephosphorylated following egg activation. Dephosphorylation is calcium dependent and correlates with the increase in the activity of EDEN-dependent deadenylation.

It localises to the nucleus. Its subcellular location is the cytoplasm. Its function is as follows. RNA-binding protein implicated in the regulation of several post-transcriptional events. May be involved in pre-mRNA alternative splicing, mRNA translation activation and stability. Mediates the rapid and sequence-specific cytoplasmic deadenylation of EDEN-containing maternal mRNAs following fertilization. Binds to AU-rich sequences (AREs) of jun mRNA. Binds to the embryonic deadenylation element (EDEN) motif localized in the 3'-UTR of maternal mRNAs. Binds to RNA containing several repeats of the consensus sequence 5'-UGU-3'. EDEN-dependent deadenylation is enhanced by the presence of an additional cis element composed of three AUU repeats. The chain is CUGBP Elav-like family member 1-A (cugbp1-a) from Xenopus laevis (African clawed frog).